The sequence spans 60 residues: UPF0434 protein Vapar_2640 (60 aa).

It belongs to the UPF0434 family.

The polypeptide is UPF0434 protein Vapar_2640 (Variovorax paradoxus (strain S110)).